A 107-amino-acid chain; its full sequence is Nucleoid-associated protein Mmar10_0436 (107 aa).

Belongs to the YbaB/EbfC family. Homodimer.

Its subcellular location is the cytoplasm. It is found in the nucleoid. Binds to DNA and alters its conformation. May be involved in regulation of gene expression, nucleoid organization and DNA protection. This chain is Nucleoid-associated protein Mmar10_0436, found in Maricaulis maris (strain MCS10) (Caulobacter maris).